The following is a 125-amino-acid chain: C-X-C motif chemokine 9 (125 aa).

The signal sequence occupies residues 1–22 (MKKSGVLFLLGIILLVLIGVQG). Intrachain disulfides connect cysteine 31–cysteine 58 and cysteine 33–cysteine 74. The disordered stretch occupies residues 93-125 (VSQKKKQKNGKKHQKKKVLKVRKSQRSRQKKTT). The segment covering 94–125 (SQKKKQKNGKKHQKKKVLKVRKSQRSRQKKTT) has biased composition (basic residues).

Belongs to the intercrine alpha (chemokine CxC) family.

The protein localises to the secreted. In terms of biological role, cytokine that affects the growth, movement, or activation state of cells that participate in immune and inflammatory response. Chemotactic for activated T-cells. Binds to CXCR3. The sequence is that of C-X-C motif chemokine 9 (CXCL9) from Homo sapiens (Human).